The sequence spans 62 residues: Photosystem II reaction center protein K (62 aa).

A propeptide spanning residues 1–25 (MPNILSLTCICFNSVLYPTTSFFFA) is cleaved from the precursor. A helical membrane pass occupies residues 33–53 (IFNPIVDVMPVIPLFFFLLAF).

It belongs to the PsbK family. PSII is composed of 1 copy each of membrane proteins PsbA, PsbB, PsbC, PsbD, PsbE, PsbF, PsbH, PsbI, PsbJ, PsbK, PsbL, PsbM, PsbT, PsbX, PsbY, PsbZ, Psb30/Ycf12, at least 3 peripheral proteins of the oxygen-evolving complex and a large number of cofactors. It forms dimeric complexes.

Its subcellular location is the plastid. The protein localises to the chloroplast thylakoid membrane. One of the components of the core complex of photosystem II (PSII). PSII is a light-driven water:plastoquinone oxidoreductase that uses light energy to abstract electrons from H(2)O, generating O(2) and a proton gradient subsequently used for ATP formation. It consists of a core antenna complex that captures photons, and an electron transfer chain that converts photonic excitation into a charge separation. In Agrostis stolonifera (Creeping bentgrass), this protein is Photosystem II reaction center protein K.